A 656-amino-acid chain; its full sequence is Phosphoprotein 85 (656 aa).

2 disordered regions span residues 1–174 (MSSR…EGDE) and 615–656 (NGNH…EYCC). Residues 46–55 (SATEDLDRME) are compositionally biased toward basic and acidic residues. 2 stretches are compositionally biased toward low complexity: residues 59-70 (SPYSVSSDAPSS) and 140-160 (DNSSSGGSSSRTTSNSSRSTS). Residues 625–634 (SPPPPLPPRD) are compositionally biased toward pro residues. Residues 635 to 656 (YPQRDERDRHRRDRRDSGEYCC) are compositionally biased toward basic and acidic residues.

This sequence belongs to the herpesviridae pp85 family. In terms of processing, phosphorylated.

It localises to the virion tegument. Its subcellular location is the host cytoplasm. In Homo sapiens (Human), this protein is Phosphoprotein 85 (UL25).